We begin with the raw amino-acid sequence, 1231 residues long: RNA-binding protein 33 (1231 aa).

A compositionally biased stretch (gly residues) spans 1 to 13 (MAAALGAGGGAGA). Disordered stretches follow at residues 1 to 168 (MAAA…EEEQ) and 219 to 261 (SQVA…FKTE). At alanine 2 the chain carries N-acetylalanine. Positions 20-36 (QFDKPGAERSWRRRAAD) are enriched in basic and acidic residues. Acidic residues predominate over residues 37-49 (EDWDSELEDDLLG). Serine 41 carries the phosphoserine modification. A compositionally biased stretch (polar residues) spans 82–108 (FSSQGVTISLNTTSGIVTSFELSDNTN). Acidic residues-rich tracts occupy residues 112 to 124 (GEQE…GDDE) and 153 to 168 (LTED…EEEQ). Over residues 224 to 240 (ETHEGGMETLELQKDIK) the composition is skewed to basic and acidic residues. Over residues 241–252 (EESDEEDDDDEE) the composition is skewed to acidic residues. Residues serine 243 and serine 271 each carry the phosphoserine modification. 2 disordered regions span residues 297–436 (FEER…KNIH) and 452–761 (PLLP…NLRE). Residues 305–316 (KQGRYGSRRGGR) show a composition bias toward basic residues. Over residues 327–344 (GDQRRDNSERGRMKEHRP) the composition is skewed to basic and acidic residues. Residues 360–379 (LIPPPQPQPPPPPPPPPPQQ) show a composition bias toward pro residues. The span at 380–398 (QPIRSLFQQQQLQPLLPLQ) shows a compositional bias: low complexity. Residues 469–483 (FPGPPEFPQHTPGPV) are compositionally biased toward pro residues. Residue arginine 520 is modified to Asymmetric dimethylarginine. Pro residues-rich tracts occupy residues 531–540 (SPPPPPPPPT), 604–618 (FIPP…PGQP), 632–647 (LHPP…PQPQ), and 661–682 (PLQP…PPQH). 2 stretches are compositionally biased toward polar residues: residues 713–728 (QTAQ…QCTP) and 736–759 (AASQ…NSNL). 2 positions are modified to phosphoserine: serine 792 and serine 816. 3 disordered regions span residues 796–840 (RAVV…ETRL), 876–932 (ERLA…FPGA), and 998–1080 (ETPH…MRQQ). The segment covering 820–829 (QPKEEAKPEA) has biased composition (basic and acidic residues). The stretch at 840–891 (LYRLKIEEQKRLREEILKQKELRRQQQAGARKKELLERLAQQQQQQQQQQHQ) forms a coiled coil. The span at 880-901 (QQQQQQQQQQHQPQQQQQQPQQ) shows a compositional bias: low complexity. 2 positions are modified to phosphoserine: serine 1002 and serine 1010. Lysine 1019 is covalently cross-linked (Glycyl lysine isopeptide (Lys-Gly) (interchain with G-Cter in SUMO2)). Residues serine 1032 and serine 1051 each carry the phosphoserine modification.

As to quaternary structure, associates with the NXF1-NXT1 RNA export complex. Interacts with ALKBH5; facilitating ALKBH5 recruitment to m6A-containing transcripts. Interacts with SENP1; promoting ALKBH5 deSUMOylation and subsequent activation.

It localises to the nucleus. The protein localises to the cytoplasm. Functionally, RNA reader protein, which recognizes and binds specific RNAs, thereby regulating RNA metabolic processes, such as mRNA export, mRNA stability and/or translation. Binds a subset of intronless RNAs containing GC-rich elements, such as NORAD, and promotes their nuclear export by recruiting target RNAs to components of the NXF1-NXT1 RNA export machinery. Specifically recognizes and binds N6-methyladenosine (m6A)-containing mRNAs, promoting their demethylation by ALKBH5. Acts as an molecular adapter, which (1) promotes ALKBH5 recruitment to m6A-containing transcripts and (2) activates ALKBH5 demethylase activity by recruiting SENP1, leading to ALKBH5 deSUMOylation and subsequent activation. In Mus musculus (Mouse), this protein is RNA-binding protein 33.